A 258-amino-acid polypeptide reads, in one-letter code: TLC domain-containing protein 4 A (258 aa).

Helical transmembrane passes span 8–28 (YLIS…YIWI), 49–71 (IEWT…SCYC), 92–112 (FILK…IIYY), 118–138 (WPII…IGLY), 144–164 (LTLL…MKWF), 170–190 (LENH…FIFI), and 217–237 (IIFF…YLVI). Positions 46-245 (SSKIEWTNKI…VIKGILKHLS (200 aa)) constitute a TLC domain.

It belongs to the TLCD4 family.

It localises to the membrane. The chain is TLC domain-containing protein 4 A (tlcd4a) from Dictyostelium discoideum (Social amoeba).